Reading from the N-terminus, the 364-residue chain is Probable dual-specificity RNA methyltransferase RlmN (364 aa).

Catalysis depends on Glu-106, which acts as the Proton acceptor. Residues 112 to 350 (YPQRNTVCIS…SCTVRDTRGR (239 aa)) enclose the Radical SAM core domain. Residues Cys-119 and Cys-356 are joined by a disulfide bond. Cys-126, Cys-130, and Cys-133 together coordinate [4Fe-4S] cluster. S-adenosyl-L-methionine-binding positions include 177–178 (GE), Ser-211, 234–236 (SLH), and Asn-313. Residue Cys-356 is the S-methylcysteine intermediate of the active site.

This sequence belongs to the radical SAM superfamily. RlmN family. [4Fe-4S] cluster is required as a cofactor.

It localises to the cytoplasm. It catalyses the reaction adenosine(2503) in 23S rRNA + 2 reduced [2Fe-2S]-[ferredoxin] + 2 S-adenosyl-L-methionine = 2-methyladenosine(2503) in 23S rRNA + 5'-deoxyadenosine + L-methionine + 2 oxidized [2Fe-2S]-[ferredoxin] + S-adenosyl-L-homocysteine. The catalysed reaction is adenosine(37) in tRNA + 2 reduced [2Fe-2S]-[ferredoxin] + 2 S-adenosyl-L-methionine = 2-methyladenosine(37) in tRNA + 5'-deoxyadenosine + L-methionine + 2 oxidized [2Fe-2S]-[ferredoxin] + S-adenosyl-L-homocysteine. In terms of biological role, specifically methylates position 2 of adenine 2503 in 23S rRNA and position 2 of adenine 37 in tRNAs. The polypeptide is Probable dual-specificity RNA methyltransferase RlmN (Mycobacterium marinum (strain ATCC BAA-535 / M)).